The chain runs to 42 residues: Delta-actinopoditoxin-Mb1a (42 aa).

Cystine bridges form between C1–C15, C8–C20, C14–C31, and C16–C42.

This sequence belongs to the neurotoxin 06 (delta-actx) family. As to expression, expressed by the venom gland.

It localises to the secreted. Functionally, neurotoxin that slows the inactivation of vertebrate tetrodotoxin-sensitive voltage-gated sodium channels (Nav) and most likely insect sodium channels presumably by binding to site 3 of the channel. Effects are an increase in resting tension, a muscle fasciculation and a decrease in indirect twitch tension. It fails to affect tetrodotoxin-resistant sodium currents. In vivo, is lethal to both vertebrates and insects. In Missulena bradleyi (Eastern mouse spider), this protein is Delta-actinopoditoxin-Mb1a.